The sequence spans 172 residues: FMN reductase (NADH) RutF 2 (172 aa).

It belongs to the non-flavoprotein flavin reductase family. RutF subfamily.

The catalysed reaction is FMNH2 + NAD(+) = FMN + NADH + 2 H(+). Catalyzes the reduction of FMN to FMNH2 which is used to reduce pyrimidine by RutA via the Rut pathway. The sequence is that of FMN reductase (NADH) RutF 2 from Methylorubrum extorquens (strain PA1) (Methylobacterium extorquens).